Reading from the N-terminus, the 832-residue chain is Alpha-glucan phosphorylase, H isozyme (832 aa).

Lysine 678 is subject to N6-(pyridoxal phosphate)lysine.

The protein belongs to the glycogen phosphorylase family. The cofactor is pyridoxal 5'-phosphate.

It localises to the cytoplasm. The catalysed reaction is [(1-&gt;4)-alpha-D-glucosyl](n) + phosphate = [(1-&gt;4)-alpha-D-glucosyl](n-1) + alpha-D-glucose 1-phosphate. In terms of biological role, phosphorylase is an important allosteric enzyme in carbohydrate metabolism. Enzymes from different sources differ in their regulatory mechanisms and in their natural substrates. However, all known phosphorylases share catalytic and structural properties. The protein is Alpha-glucan phosphorylase, H isozyme of Triticum aestivum (Wheat).